We begin with the raw amino-acid sequence, 588 residues long: Probable G-protein coupled receptor 162 (588 aa).

Topologically, residues 1–17 are extracellular; that stretch reads MARGGLGAEEASLRSNA. The helical transmembrane segment at 18–38 threads the bilayer; that stretch reads LSWLACGLLALLANAWIILSI. The Cytoplasmic portion of the chain corresponds to 39 to 49; it reads SAKQQKHKPLE. Residues 50-70 traverse the membrane as a helical segment; that stretch reads LLLCFLAGTHILMAAVPLTTF. The Extracellular segment spans residues 71–91; sequence AVVQLRRQASSDYDWNESICK. N-linked (GlcNAc...) asparagine glycosylation occurs at Asn-86. Residues 92–112 traverse the membrane as a helical segment; that stretch reads VFVSTYYTLALATCFTVASLS. The Cytoplasmic portion of the chain corresponds to 113-133; that stretch reads YHRMWMVRWPVNYRLSNAKKQ. The helical transmembrane segment at 134–154 threads the bilayer; that stretch reads ALHAVMGIWMVSFILSTLPSI. Residues 155–174 lie on the Extracellular side of the membrane; sequence GWHNNGERYYARGCQFIVSK. A helical membrane pass occupies residues 175-195; it reads IGLGFGVCFSLLLLGGIVMGL. Over 196 to 275 the chain is Cytoplasmic; that stretch reads VCVAITFYQT…SLQVTNLVSA (80 aa). Residues 276 to 296 traverse the membrane as a helical segment; sequence IVFLYDSLTGVPILVVSFFSL. Topologically, residues 297–303 are extracellular; that stretch reads KSDSAPP. A helical membrane pass occupies residues 304 to 324; sequence WMVLAVLWCSMAQTLLLPSFI. The Cytoplasmic portion of the chain corresponds to 325 to 588; that stretch reads WSCERYRADV…GNPIFPQLTL (264 aa). Phosphoserine is present on residues Ser-413 and Ser-435. Disordered stretches follow at residues 511 to 545 and 561 to 588; these read ETPL…SPDS and SLTG…QLTL. Over residues 514–525 the composition is skewed to pro residues; the sequence is LPSPTASPGPSP. The span at 530–540 shows a compositional bias: low complexity; it reads PLGFSPRRLSL.

This sequence belongs to the G-protein coupled receptor 1 family.

It localises to the cell membrane. In terms of biological role, orphan receptor. The sequence is that of Probable G-protein coupled receptor 162 (Gpr162) from Mus musculus (Mouse).